We begin with the raw amino-acid sequence, 353 residues long: MPSSPVRIGVVFGGASGEHAVSIRSAITVINALQEGQNRDHFEVVPLYIDQEGRWWPEHIANSVLEQKQPLAEDSLPHPLPPAGFRSLPIDNDRVDVWFPVLHGPNGEDGTVQGLFTLMGQPYVGSGVLGSAVGMDKLAMKAAFAAAGLPQVPYVGLNVADLNHPERQNKLVARIEAELGYPCFVKPANMGSSVGISKARHRDQLLAGLKEAARHDTRLVVEHGVSARELECAVLGRQQLKASVVGEISFEADWYDYETKYTDGCSQTLIPAPLPDQVSAQIQAIALQACTAVHAYGLARVDVFYDEKSGDIWLNEINTLPGFTSQSMYPMLWEASGVALPDLVAQLVHTARE.

The ATP-grasp domain maps to 141 to 349; it reads KAAFAAAGLP…LPDLVAQLVH (209 aa). 176 to 231 contributes to the ATP binding site; that stretch reads EAELGYPCFVKPANMGSSVGISKARHRDQLLAGLKEAARHDTRLVVEHGVSARELE. Residues Asp-302, Glu-316, and Asn-318 each contribute to the Mg(2+) site.

It belongs to the D-alanine--D-alanine ligase family. Mg(2+) is required as a cofactor. Mn(2+) serves as cofactor.

The protein resides in the cytoplasm. It catalyses the reaction 2 D-alanine + ATP = D-alanyl-D-alanine + ADP + phosphate + H(+). It functions in the pathway cell wall biogenesis; peptidoglycan biosynthesis. Functionally, cell wall formation. The polypeptide is D-alanine--D-alanine ligase (Synechococcus sp. (strain CC9311)).